The primary structure comprises 120 residues: Glycine cleavage system H protein (120 aa).

Residues 17–99 form the Lipoyl-binding domain; the sequence is IATVGITSHA…QGAGWFFKLK (83 aa). Lys58 bears the N6-lipoyllysine mark.

This sequence belongs to the GcvH family. In terms of assembly, the glycine cleavage system is composed of four proteins: P, T, L and H. (R)-lipoate is required as a cofactor.

In terms of biological role, the glycine cleavage system catalyzes the degradation of glycine. The H protein shuttles the methylamine group of glycine from the P protein to the T protein. The chain is Glycine cleavage system H protein from Agrobacterium fabrum (strain C58 / ATCC 33970) (Agrobacterium tumefaciens (strain C58)).